The following is an 85-amino-acid chain: UPF0297 protein LBUL_1485 (85 aa).

The protein belongs to the UPF0297 family.

This Lactobacillus delbrueckii subsp. bulgaricus (strain ATCC BAA-365 / Lb-18) protein is UPF0297 protein LBUL_1485.